The following is a 318-amino-acid chain: Ribose-phosphate pyrophosphokinase 2 (318 aa).

96–101 (RQDKKD) serves as a coordination point for ATP. 4 residues coordinate Mg(2+): Asp-128, His-130, Asp-139, and Asp-143. His-130 lines the ATP pocket. The segment at 212–227 (KDRVAILVDDMADTCG) is binding of phosphoribosylpyrophosphate.

This sequence belongs to the ribose-phosphate pyrophosphokinase family. In terms of assembly, homodimer. The active form is probably a hexamer composed of 3 homodimers. The cofactor is Mg(2+).

The enzyme catalyses D-ribose 5-phosphate + ATP = 5-phospho-alpha-D-ribose 1-diphosphate + AMP + H(+). The protein operates within metabolic intermediate biosynthesis; 5-phospho-alpha-D-ribose 1-diphosphate biosynthesis; 5-phospho-alpha-D-ribose 1-diphosphate from D-ribose 5-phosphate (route I): step 1/1. With respect to regulation, activated by magnesium and inorganic phosphate. Competitively or non-competitively inhibited by ADP, 2,3-bisphosphoglyceride or GDP. Functionally, catalyzes the synthesis of phosphoribosylpyrophosphate (PRPP) that is essential for nucleotide synthesis. This is Ribose-phosphate pyrophosphokinase 2 (prps2) from Xenopus laevis (African clawed frog).